We begin with the raw amino-acid sequence, 90 residues long: Histone H1.M6.2 (90 aa).

A disordered region spans residues 1–90; sequence MSDAAVPPKK…KAVKKAPKKK (90 aa). Basic residues predominate over residues 11–90; that stretch reads ASPKKAAAKK…KAVKKAPKKK (80 aa).

Its subcellular location is the nucleus. It localises to the chromosome. The protein is Histone H1.M6.2 of Trypanosoma cruzi.